The following is an 867-amino-acid chain: Elongation factor 2 (867 aa).

The region spanning 17 to 368 (HNIRNLSVVA…MIVLHLPSPV (352 aa)) is the tr-type G domain. 26 to 33 (AHVDHGKS) contributes to the GTP binding site. A phosphothreonine mark is found at Thr57 and Thr59. GTP is bound by residues 176 to 179 (NKLD) and 231 to 233 (SGL). His723 bears the Diphthamide mark.

The protein belongs to the TRAFAC class translation factor GTPase superfamily. Classic translation factor GTPase family. EF-G/EF-2 subfamily. In terms of processing, phosphorylation by EF-2 kinase completely inactivates EF-2.

The protein resides in the cytoplasm. It catalyses the reaction GTP + H2O = GDP + phosphate + H(+). In terms of biological role, catalyzes the GTP-dependent ribosomal translocation step during translation elongation. During this step, the ribosome changes from the pre-translocational (PRE) to the post-translocational (POST) state as the newly formed A-site-bound peptidyl-tRNA and P-site-bound deacylated tRNA move to the P and E sites, respectively. Catalyzes the coordinated movement of the two tRNA molecules, the mRNA and conformational changes in the ribosome. The protein is Elongation factor 2 of Blastocystis hominis.